Consider the following 155-residue polypeptide: Ribosome maturation factor RimP (155 aa).

It belongs to the RimP family.

The protein localises to the cytoplasm. In terms of biological role, required for maturation of 30S ribosomal subunits. This chain is Ribosome maturation factor RimP, found in Staphylococcus haemolyticus (strain JCSC1435).